Consider the following 546-residue polypeptide: Chaperonin GroEL 1 (546 aa).

Residues 29-32, 86-90, Gly413, 477-479, and Asp493 contribute to the ATP site; these read TIGP, DGTTT, and NAA. Positions 523 to 546 are disordered; that stretch reads PAEPAPQDGHGHGHGHSHPQGPGF.

This sequence belongs to the chaperonin (HSP60) family. As to quaternary structure, forms a cylinder of 14 subunits composed of two heptameric rings stacked back-to-back. Interacts with the co-chaperonin GroES.

It is found in the cytoplasm. The enzyme catalyses ATP + H2O + a folded polypeptide = ADP + phosphate + an unfolded polypeptide.. In terms of biological role, together with its co-chaperonin GroES, plays an essential role in assisting protein folding. The GroEL-GroES system forms a nano-cage that allows encapsulation of the non-native substrate proteins and provides a physical environment optimized to promote and accelerate protein folding. The sequence is that of Chaperonin GroEL 1 from Frankia casuarinae (strain DSM 45818 / CECT 9043 / HFP020203 / CcI3).